The chain runs to 705 residues: Complement C1r subcomponent (705 aa).

The first 17 residues, 1–17 (MWLLYLLVPALFCRAGG), serve as a signal peptide directing secretion. One can recognise a CUB 1 domain in the interval 18–141 (SIPIPQKLFG…KGFLAYYQAV (124 aa)). The Ca(2+) site is built by glutamate 66, aspartate 74, and aspartate 119. An intrachain disulfide couples cysteine 71 to cysteine 89. A glycan (N-linked (GlcNAc...) asparagine) is linked at asparagine 125. Aspartate 142, leucine 143, and glutamate 145 together coordinate Ca(2+). The region spanning 142 to 190 (DLDECASRSKSGEEDPQPQCQHLCHNYVGGYFCSCRPGYELQEDTHSCQ) is the EGF-like; calcium-binding domain. 4 disulfides stabilise this stretch: cysteine 146–cysteine 165, cysteine 161–cysteine 174, cysteine 176–cysteine 189, and cysteine 193–cysteine 220. The Ca(2+) site is built by asparagine 167, tyrosine 168, and glycine 171. Residue asparagine 167 is modified to (3R)-3-hydroxyasparagine. The 113-residue stretch at 193-305 (CSSELYTEAS…RGWKLRYTTE (113 aa)) folds into the CUB 2 domain. Serine 206 bears the Phosphoserine; by CK2 mark. Asparagine 221 carries an N-linked (GlcNAc...) asparagine glycan. The Ca(2+) site is built by aspartate 243, aspartate 253, aspartate 290, and aspartate 294. A disulfide bridge connects residues cysteine 250 and cysteine 268. Sushi domains follow at residues 307–373 (IKCP…RCKI) and 374–449 (KDCG…RCLP). Disulfide bonds link cysteine 309/cysteine 358, cysteine 338/cysteine 371, cysteine 376/cysteine 429, cysteine 406/cysteine 447, and cysteine 451/cysteine 577. One can recognise a Peptidase S1 domain in the interval 464–702 (IIGGQKAKMG…YVDWIKKEME (239 aa)). Histidine 502 serves as the catalytic Charge relay system. Asparagine 514 is a glycosylation site (N-linked (GlcNAc...) asparagine). Aspartate 557 (charge relay system) is an active-site residue. Residue asparagine 581 is glycosylated (N-linked (GlcNAc...) asparagine). Disulfide bonds link cysteine 620-cysteine 639 and cysteine 650-cysteine 680. Catalysis depends on serine 654, which acts as the Charge relay system.

Belongs to the peptidase S1 family. As to quaternary structure, core component of the complement C1 complex, a calcium-dependent complex composed of 1 molecule of the C1Q subcomplex, 2 molecules of C1R and 2 molecules of C1S. The C1Q subcomplex is composed 18 subunits: 3 chains of C1QA, C1QB, and C1QC trimerize to form 6 collagen-like triple helices connected to six globular ligand-recognition modules. Within the C1 complex, C1R is a dimer of identical chains, each of which is activated by cleavage into two chains, heavy and light, connected by disulfide bonds. Post-translationally, cleaved and activated by autocatalytic processing to generate Complement C1r subcomponent heavy and light chains that are connected by disulfide bonds. The iron and 2-oxoglutarate dependent 3-hydroxylation of aspartate and asparagine is (R) stereospecific within EGF domains.

The protein localises to the secreted. It localises to the cell surface. The enzyme catalyses Selective cleavage of Lys(or Arg)-|-Ile bond in complement subcomponent C1s to form the active form of C1s (EC 3.4.21.42).. With respect to regulation, activated by the C1Q subcomplex of the C1 complex following C1Q binding to immunoglobulins (IgG or IgM) complexed with antigens to form antigen-antibody complexes on the surface of pathogens. Immunoglobulin-binding promotes autoactivation of C1R, which results in the cleavage of the Arg-Ile bond in the catalytic domain. In terms of biological role, serine protease component of the complement C1 complex, a multiprotein complex that initiates the classical pathway of the complement system, a cascade of proteins that leads to phagocytosis and breakdown of pathogens and signaling that strengthens the adaptive immune system. C1R catalyzes the first enzymatic step in the classical complement pathway: it is activated by the C1Q subcomplex of the C1 complex, which associates with IgG or IgM immunoglobulins complexed with antigens to form antigen-antibody complexes on the surface of pathogens. Immunoglobulin-binding promotes the autocatalytic cleavage and activation of C1R. Activated C1R then cleaves and activates C1S, the second protease of the classical complement pathway. It is unclear if C1R activates C1S within single, strained C1 complexes or between neighboring C1 complexes on surfaces. In Homo sapiens (Human), this protein is Complement C1r subcomponent.